An 88-amino-acid polypeptide reads, in one-letter code: Putative defensin-like protein 228 (88 aa).

Residues 1 to 27 form the signal peptide; the sequence is MMKSAILLMVSCVFMFLVVSYIQDVEG. Intrachain disulfides connect C32–C88, C42–C66, C50–C82, and C64–C84.

This sequence belongs to the DEFL family.

It is found in the secreted. This chain is Putative defensin-like protein 228 (SCRL3), found in Arabidopsis thaliana (Mouse-ear cress).